An 871-amino-acid chain; its full sequence is Transient receptor potential cation channel subfamily V member 4 (871 aa).

Disordered regions lie at residues 1 to 68 (MADP…PNLR) and 110 to 143 (YGTY…PQPP). Residues 1 to 469 (MADPGDGPRA…RDKWRKFGAV (469 aa)) are Cytoplasmic-facing. The residue at position 110 (tyrosine 110) is a Phosphotyrosine. Basic and acidic residues predominate over residues 116-129 (HPSDNKRWRRKVVE). ATP-binding positions include lysine 192, lysine 197, asparagine 201, 236–239 (YRGQ), and arginine 248. ANK repeat units lie at residues 237 to 266 (RGQT…DVHA) and 284 to 313 (FGEL…KKAD). Position 249-251 (249-251 (RCK)) interacts with a 1,2-diacyl-sn-glycero-3-phospho-(1D-myo-inositol-4,5-bisphosphate). Tyrosine 253 is subject to Phosphotyrosine. A 1,2-diacyl-sn-glycero-3-phospho-(1D-myo-inositol-4,5-bisphosphate) is bound by residues 296–299 (NQPH) and lysine 344. Residues 369-398 (DGLSPLMMAAKTGKIGVFQHIIRREVTDED) form an ANK 3 repeat. Residues 470 to 490 (SFYINVVSYLCAMVIFTLTAY) form a helical membrane-spanning segment. The Extracellular segment spans residues 491-507 (YQPLEGTPPYPYRTTVD). Residues 508 to 534 (YLRLAGEVITLLTGVLFFFTSIKDLFM) form a helical membrane-spanning segment. At 535-547 (KKCPGVNSLFVDG) the chain is on the cytoplasmic side. A helical membrane pass occupies residues 548 to 568 (SFQLLYFIYSVLVVVSAALYL). Residues 569 to 572 (AGIE) lie on the Extracellular side of the membrane. The helical transmembrane segment at 573–593 (AYLAVMVFALVLGWMNALYFT) threads the bilayer. The Cytoplasmic segment spans residues 594 to 608 (RGLKLTGTYSIMIQK). Residues 609 to 636 (ILFKDLFRFLLVYLLFMIGYASALVTLL) traverse the membrane as a helical segment. Residues 637–665 (NPCTNMKVCNEDQSNCTVPSYPACRDSET) are Extracellular-facing. Residues 666–685 (FSAFLLDLFKLTIGMGDLEM) constitute an intramembrane region (pore-forming). The short motif at 679–682 (GMGD) is the Selectivity filter element. Aspartate 682 contributes to the Ca(2+) binding site. At 686–693 (LSSAKYPV) the chain is on the extracellular side. A helical membrane pass occupies residues 694 to 722 (VFILLLVTYIILTFVLLLNMLIALMGETV). At 723–871 (GQVSKESKHI…PKWRAEDAPL (149 aa)) the chain is on the cytoplasmic side. The residue at position 805 (tyrosine 805) is a Phosphotyrosine. The interval 812–831 (HTMGRLRRDRWSSVVPRVVE) is interaction with calmodulin and ITPR3. A Phosphoserine modification is found at serine 824.

It belongs to the transient receptor (TC 1.A.4) family. TrpV subfamily. TRPV4 sub-subfamily. Homotetramer. Interacts with calmodulin. Interacts with MAP7 and Src family Tyr protein kinases LYN, SRC, FYN, HCK, LCK and YES. Interacts with CTNNB1. The TRPV4 and CTNNB1 complex can interact with CDH1. Part of a complex containing MLC1, AQP4, HEPACAM and ATP1B1. Interacts with PACSIN1, PACSIN2 and PACSIN3 (via SH3 domain). Interacts with ITPR3. Interacts with AQP5; the interaction is probably indirect and regulates TRPV4 activation by hypotonicity. Interacts with ANO1. Interacts (via C-terminus) with PKD2 (via C-terminus). Interacts with DDX3X; this interaction is decreased when the channel is activated. N-glycosylated. In terms of tissue distribution, expressed lung, spleen, kidney, testis, fat, and at very low levels in trigeminal ganglia.

The protein resides in the cell membrane. It is found in the apical cell membrane. It localises to the cell junction. Its subcellular location is the adherens junction. The protein localises to the cell projection. The protein resides in the cilium. The enzyme catalyses Ca(2+)(in) = Ca(2+)(out). In terms of biological role, non-selective calcium permeant cation channel involved in osmotic sensitivity and mechanosensitivity. Activation by exposure to hypotonicity within the physiological range exhibits an outward rectification. Also activated by heat, low pH, citrate and phorbol esters. Increase of intracellular Ca(2+) potentiates currents. Channel activity seems to be regulated by a calmodulin-dependent mechanism with a negative feedback mechanism. Acts as a regulator of intracellular Ca(2+) in synoviocytes. Plays an obligatory role as a molecular component in the nonselective cation channel activation induced by 4-alpha-phorbol 12,13-didecanoate and hypotonic stimulation in synoviocytes and also regulates production of IL-8. Together with PKD2, forms mechano- and thermosensitive channels in cilium. Promotes cell-cell junction formation in skin keratinocytes and plays an important role in the formation and/or maintenance of functional intercellular barriers. Negatively regulates expression of PPARGC1A, UCP1, oxidative metabolism and respiration in adipocytes. Regulates expression of chemokines and cytokines related to pro-inflammatory pathway in adipocytes. Together with AQP5, controls regulatory volume decrease in salivary epithelial cells. Required for normal development and maintenance of bone and cartilage. In its inactive state, may sequester DDX3X at the plasma membrane. When activated, the interaction between both proteins is affected and DDX3X relocalizes to the nucleus. In neurons of the central nervous system, could play a role in triggering voluntary water intake in response to increased sodium concentration in body fluid. The sequence is that of Transient receptor potential cation channel subfamily V member 4 (Trpv4) from Rattus norvegicus (Rat).